The sequence spans 265 residues: Orotidine 5'-phosphate decarboxylase (265 aa).

Residues D37, 59–61 (KTH), 91–100 (DRKFADIGNT), Y217, and R236 each bind substrate. The active-site Proton donor is K93.

Belongs to the OMP decarboxylase family.

The enzyme catalyses orotidine 5'-phosphate + H(+) = UMP + CO2. It participates in pyrimidine metabolism; UMP biosynthesis via de novo pathway; UMP from orotate: step 2/2. The sequence is that of Orotidine 5'-phosphate decarboxylase (URA3) from Saccharomycopsis fibuligera (Yeast).